Reading from the N-terminus, the 632-residue chain is Phosphatidylinositol-3,5-bisphosphate 3-phosphatase MTMR8 (632 aa).

In terms of domain architecture, Myotubularin phosphatase spans 126–500 (GWELISVVND…LHFKFWCGMY (375 aa)). Asn250, Asn275, and Ile276 together coordinate a 1,2-diacyl-sn-glycero-3-phospho-(1D-myo-inositol-3,5-bisphosphate). 3 residues coordinate a 1,2-diacyl-sn-glycero-3-phospho-(1D-myo-inositol-3-phosphate): Asn250, Asn275, and Ile276. Residue Cys338 is the Phosphocysteine intermediate of the active site. Positions 339, 340, 341, 342, 343, 344, 380, and 384 each coordinate a 1,2-diacyl-sn-glycero-3-phospho-(1D-myo-inositol-3,5-bisphosphate). Residues Ser339, Asp340, Gly341, Trp342, Asp343, and Arg344 each coordinate a 1,2-diacyl-sn-glycero-3-phospho-(1D-myo-inositol-3-phosphate). Residues Ser339 and Asp340 each contribute to the phosphate site. Phosphate contacts are provided by Trp342, Asp343, and Arg344. Arg384 lines the a 1,2-diacyl-sn-glycero-3-phospho-(1D-myo-inositol-3-phosphate) pocket. The tract at residues 545-632 (LPDPAGPINT…HSKEEVQESS (88 aa)) is disordered. Over residues 602–632 (EPAANEHDLSSKDKPVFVETEHSKEEVQESS) the composition is skewed to basic and acidic residues.

It belongs to the protein-tyrosine phosphatase family. Non-receptor class myotubularin subfamily. Homodimer.

It localises to the nucleus envelope. The catalysed reaction is a 1,2-diacyl-sn-glycero-3-phospho-(1D-myo-inositol-3,5-bisphosphate) + H2O = a 1,2-diacyl-sn-glycero-3-phospho-(1D-myo-inositol-5-phosphate) + phosphate. It carries out the reaction a 1,2-diacyl-sn-glycero-3-phospho-(1D-myo-inositol-3-phosphate) + H2O = a 1,2-diacyl-sn-glycero-3-phospho-(1D-myo-inositol) + phosphate. It catalyses the reaction 1,2-dioctanoyl-sn-glycero-3-phospho-(1D-myo-inositol-3,5-bisphosphate) + H2O = 1,2-dioctanoyl-sn-glycero-3-phospho-(1D-myo-inositol-5-phosphate) + phosphate. Its function is as follows. Lipid phosphatase that specifically dephosphorylates the D-3 position of phosphatidylinositol 3-phosphate and phosphatidylinositol 3,5-bisphosphate, generating phosphatidylinositol and phosphatidylinositol 5-phosphate. This Danio rerio (Zebrafish) protein is Phosphatidylinositol-3,5-bisphosphate 3-phosphatase MTMR8 (mtmr8).